The sequence spans 270 residues: Molybdenum-pterin-binding protein MopB (270 aa).

Mop domains follow at residues 131–197 (RTSA…LLAG) and 203–269 (RLSV…ILAL).

The protein belongs to the ModE family.

This chain is Molybdenum-pterin-binding protein MopB (mopB), found in Rhodobacter capsulatus (Rhodopseudomonas capsulata).